The primary structure comprises 351 residues: Nicotinate-nucleotide--dimethylbenzimidazole phosphoribosyltransferase (351 aa).

Glu-317 (proton acceptor) is an active-site residue.

This sequence belongs to the CobT family.

The enzyme catalyses 5,6-dimethylbenzimidazole + nicotinate beta-D-ribonucleotide = alpha-ribazole 5'-phosphate + nicotinate + H(+). Its pathway is nucleoside biosynthesis; alpha-ribazole biosynthesis; alpha-ribazole from 5,6-dimethylbenzimidazole: step 1/2. Catalyzes the synthesis of alpha-ribazole-5'-phosphate from nicotinate mononucleotide (NAMN) and 5,6-dimethylbenzimidazole (DMB). This is Nicotinate-nucleotide--dimethylbenzimidazole phosphoribosyltransferase from Pseudomonas putida (strain W619).